A 295-amino-acid polypeptide reads, in one-letter code: 4-hydroxy-tetrahydrodipicolinate synthase (295 aa).

A pyruvate-binding site is contributed by Thr-47. The active-site Proton donor/acceptor is the Tyr-135. Lys-163 acts as the Schiff-base intermediate with substrate in catalysis. Pyruvate is bound at residue Ile-206.

As to quaternary structure, homodimer. In fact, exists in a monomer-dimer equilibrium in solution, shifted in favor of the dimer in presence of the substrate pyruvate; the monomer has significantly reduced activity compared with the dimer.

The protein localises to the cytoplasm. It carries out the reaction L-aspartate 4-semialdehyde + pyruvate = (2S,4S)-4-hydroxy-2,3,4,5-tetrahydrodipicolinate + H2O + H(+). Its pathway is amino-acid biosynthesis; L-lysine biosynthesis via DAP pathway; (S)-tetrahydrodipicolinate from L-aspartate: step 3/4. Is insensitive to lysine-feedback inhibition. Shows ASA substrate inhibition. Catalyzes the condensation of (S)-aspartate-beta-semialdehyde [(S)-ASA] and pyruvate to 4-hydroxy-tetrahydrodipicolinate (HTPA). In Staphylococcus aureus (strain MRSA252), this protein is 4-hydroxy-tetrahydrodipicolinate synthase.